A 30-amino-acid polypeptide reads, in one-letter code: Cliotide T20 (30 aa).

The cyclopeptide (Gly-Asn) cross-link spans glycine 1 to asparagine 30. 3 cysteine pairs are disulfide-bonded: cysteine 6–cysteine 20, cysteine 10–cysteine 22, and cysteine 15–cysteine 27.

Contains 3 disulfide bonds. In terms of processing, this is a cyclic peptide. In terms of tissue distribution, expressed in root nodules but not in seed.

Probably participates in a plant defense mechanism. Active against Gram-negative bacterium E.coli ATCC 700926 (MIC=0.5 uM) under low-salt conditions. Not active against Gram-positive bacterium S.aureus ATCC 12600 up to a concentration of 100 uM under low-salt conditions. Exhibits immunomodulatory activity but no cytotoxicity in vitro. The protein is Cliotide T20 of Clitoria ternatea (Butterfly pea).